The sequence spans 93 residues: MLKPLGDRVVLKVEEKEQKVGGFVIAGAGQDATKTAKVVAAGDGIRTLNGELVAPSVKAGDTVLVESHAGIEVKDGEEKYLVVNEANILAIVE.

It belongs to the GroES chaperonin family. As to quaternary structure, heptamer of 7 subunits arranged in a ring. Interacts with the chaperonin GroEL.

The protein resides in the cytoplasm. Together with the chaperonin GroEL, plays an essential role in assisting protein folding. The GroEL-GroES system forms a nano-cage that allows encapsulation of the non-native substrate proteins and provides a physical environment optimized to promote and accelerate protein folding. GroES binds to the apical surface of the GroEL ring, thereby capping the opening of the GroEL channel. This is Co-chaperonin GroES from Streptococcus anginosus.